The chain runs to 318 residues: Transaldolase (318 aa).

Residue Lys132 is the Schiff-base intermediate with substrate of the active site.

It belongs to the transaldolase family. Type 1 subfamily. Homodimer.

Its subcellular location is the cytoplasm. The catalysed reaction is D-sedoheptulose 7-phosphate + D-glyceraldehyde 3-phosphate = D-erythrose 4-phosphate + beta-D-fructose 6-phosphate. It functions in the pathway carbohydrate degradation; pentose phosphate pathway; D-glyceraldehyde 3-phosphate and beta-D-fructose 6-phosphate from D-ribose 5-phosphate and D-xylulose 5-phosphate (non-oxidative stage): step 2/3. In terms of biological role, transaldolase is important for the balance of metabolites in the pentose-phosphate pathway. This Hamiltonella defensa subsp. Acyrthosiphon pisum (strain 5AT) protein is Transaldolase.